We begin with the raw amino-acid sequence, 98 residues long: NADH-ubiquinone oxidoreductase chain 4L (98 aa).

3 helical membrane-spanning segments follow: residues 1–21 (MTPT…GMLI), 26–46 (LMAS…MTAV), and 61–81 (IIML…LVSI).

Belongs to the complex I subunit 4L family. Core subunit of respiratory chain NADH dehydrogenase (Complex I) which is composed of 45 different subunits.

The protein resides in the mitochondrion inner membrane. It catalyses the reaction a ubiquinone + NADH + 5 H(+)(in) = a ubiquinol + NAD(+) + 4 H(+)(out). Core subunit of the mitochondrial membrane respiratory chain NADH dehydrogenase (Complex I) which catalyzes electron transfer from NADH through the respiratory chain, using ubiquinone as an electron acceptor. Part of the enzyme membrane arm which is embedded in the lipid bilayer and involved in proton translocation. The chain is NADH-ubiquinone oxidoreductase chain 4L (MT-ND4L) from Papio hamadryas (Hamadryas baboon).